The following is a 546-amino-acid chain: MAAKDIRFGEDARTRMVRGVNVLANAVKATLGPKGRNVVLEKSFGAPTITKDGVSVAKEIELADKFENMGAQMVKEVASKTNDNAGDGTTTATVLAQALIREGAKAVAAGMNPMDLKRGIDQAVKAAVVELKNISKPTTDDKAIAQVGTISANSDESIGNIIAEAMKKVGKEGVITVEEGSGLENELDVVEGMQFDRGYLSPYFINNQQSQSADLDDPFILLHDKKISNVRDLLPVLEGVAKAGKPLLIVAEEVEGEALATLVVNTIRGIVKVVAVKAPGFGDRRKAMLEDMAVLTGGTVISEEVGLALEKATIKDLGRAKKVQVSKENTTIIDGAGDTAAIESRVGQIKTQIEDTSSDYDREKLQERVAKLAGGVAVIKVGASTEIEMKEKKARVEDALHATRAAVEEGVVPGGGVALVRALVAVGELKGANEDQTHGIQIALRAMEAPLREIVANAGEEPSVILNKVKEGSGNYGYNAANGEFGDMVEFGILDPTKVTRSALQNAASIAGLMITTEAMVADAPKKDEPAMPAGGGMGGMGGMDF.

Residues 30 to 33, K51, 87 to 91, G415, 479 to 481, and D495 each bind ATP; these read TLGP, DGTTT, and NAA. The segment at 526–546 is disordered; sequence KKDEPAMPAGGGMGGMGGMDF. Residues 534-546 are compositionally biased toward gly residues; that stretch reads AGGGMGGMGGMDF.

Belongs to the chaperonin (HSP60) family. In terms of assembly, forms a cylinder of 14 subunits composed of two heptameric rings stacked back-to-back. Interacts with the co-chaperonin GroES.

It localises to the cytoplasm. The catalysed reaction is ATP + H2O + a folded polypeptide = ADP + phosphate + an unfolded polypeptide.. Together with its co-chaperonin GroES, plays an essential role in assisting protein folding. The GroEL-GroES system forms a nano-cage that allows encapsulation of the non-native substrate proteins and provides a physical environment optimized to promote and accelerate protein folding. The protein is Chaperonin GroEL of Xanthomonas euvesicatoria pv. vesicatoria (strain 85-10) (Xanthomonas campestris pv. vesicatoria).